Consider the following 222-residue polypeptide: MPPLALLKLMNLISPALPVGAFAYSQGLEWAIDHGGIDTPEKIHDWLQGVISQGLGKTDLPVLFKLLQAWGANDHEQINSWNAWLLAARETQELLDEDRHVGKALAKLLRDLNVPGAEPWLERPASLLTLWTLACAHWDIDAESAALGFLWSWLENQIAVAGKTLPLAQTAAQRILQRLMPVLTETVAAATQIKEEDFGASLPGWAMACANHETQYSRLFRS.

This sequence belongs to the UreF family. UreD, UreF and UreG form a complex that acts as a GTP-hydrolysis-dependent molecular chaperone, activating the urease apoprotein by helping to assemble the nickel containing metallocenter of UreC. The UreE protein probably delivers the nickel.

It localises to the cytoplasm. In terms of biological role, required for maturation of urease via the functional incorporation of the urease nickel metallocenter. In Hahella chejuensis (strain KCTC 2396), this protein is Urease accessory protein UreF.